A 362-amino-acid chain; its full sequence is MSQVFNFSAGPAMIFPEVLQKAQNELINWLNQGVSVMEVSHRGKYFMELVTQAEKDLREVYNIPDNYRTLFLQGGARGQFATIPMNLIGKKGKALYLNSGHWSATAAKEARNFAEIDEITIVENGEQTRITDLDFSHIADQYDYVHYCPNETISGVEIFDVPNVGNAVLVADMSSNILSRQIDISKFGVIYAGAQKNLGPAGITLVIIRDDLIGNARKETPSIWNYATQRDADSMINTPPTFAWYLCSLVFKHLKEIGGLEIIEKRNALKAQTLYDYIDSSKLYRNVVAKENRSTMNVTFITGNPELDAKFVAESTAAGLQALKGHKVLGGMRASIYNAMSQNGVEALISFMKKFETENLPQ.

Arg42 lines the L-glutamate pocket. Residues 76–77, Trp102, Thr152, Asp172, and Gln195 each bind pyridoxal 5'-phosphate; that span reads AR. Position 196 is an N6-(pyridoxal phosphate)lysine (Lys196). Residue 237-238 participates in pyridoxal 5'-phosphate binding; it reads NT.

This sequence belongs to the class-V pyridoxal-phosphate-dependent aminotransferase family. SerC subfamily. Homodimer. The cofactor is pyridoxal 5'-phosphate.

The protein localises to the cytoplasm. The catalysed reaction is O-phospho-L-serine + 2-oxoglutarate = 3-phosphooxypyruvate + L-glutamate. It carries out the reaction 4-(phosphooxy)-L-threonine + 2-oxoglutarate = (R)-3-hydroxy-2-oxo-4-phosphooxybutanoate + L-glutamate. It participates in amino-acid biosynthesis; L-serine biosynthesis; L-serine from 3-phospho-D-glycerate: step 2/3. Its pathway is cofactor biosynthesis; pyridoxine 5'-phosphate biosynthesis; pyridoxine 5'-phosphate from D-erythrose 4-phosphate: step 3/5. Its function is as follows. Catalyzes the reversible conversion of 3-phosphohydroxypyruvate to phosphoserine and of 3-hydroxy-2-oxo-4-phosphonooxybutanoate to phosphohydroxythreonine. The chain is Phosphoserine aminotransferase from Haemophilus influenzae (strain ATCC 51907 / DSM 11121 / KW20 / Rd).